Consider the following 155-residue polypeptide: Small ribosomal subunit protein uS7c (155 aa).

The protein belongs to the universal ribosomal protein uS7 family. As to quaternary structure, part of the 30S ribosomal subunit.

Its subcellular location is the plastid. The protein localises to the chloroplast. One of the primary rRNA binding proteins, it binds directly to 16S rRNA where it nucleates assembly of the head domain of the 30S subunit. The polypeptide is Small ribosomal subunit protein uS7c (Beta vulgaris (Sugar beet)).